The primary structure comprises 97 residues: Large ribosomal subunit protein bL27 (97 aa).

A propeptide spanning residues 1–12 is cleaved from the precursor; that stretch reads MLKMNLANLQLF. The segment at 14 to 37 is disordered; the sequence is HKKGGGSTSNGRDSQAKRLGAKAA.

Belongs to the bacterial ribosomal protein bL27 family. The N-terminus is cleaved by ribosomal processing cysteine protease Prp.

This is Large ribosomal subunit protein bL27 from Streptococcus gordonii (strain Challis / ATCC 35105 / BCRC 15272 / CH1 / DL1 / V288).